The sequence spans 127 residues: uncharacterized protein (127 aa).

Residues 12–32 traverse the membrane as a helical segment; that stretch reads FFFLILFYFCIISSFLFLFIF.

It is found in the membrane. This is an uncharacterized protein from Saccharomyces cerevisiae (strain ATCC 204508 / S288c) (Baker's yeast).